We begin with the raw amino-acid sequence, 37 residues long: Large ribosomal subunit protein bL36c (37 aa).

This sequence belongs to the bacterial ribosomal protein bL36 family.

Its subcellular location is the plastid. The protein localises to the chloroplast. This is Large ribosomal subunit protein bL36c (rpl36) from Cyanidium caldarium (Red alga).